Consider the following 371-residue polypeptide: MPDAIEVRKVPIHSVADASELAKLIDDGVMQAERVIAIIGKTEGNGGVNDYTRIIADRAFREVLVEKGAPAEQVKQVPIVWSGGTDGVISPHATIFATVPPEDLTGALAPSDEQRLTVGFAMSERLAPEDIGRTAMITKVADAVKVAMERAGISDPADVHYVQTKTPLLTIHTIRDAKSRGKTVWTEHTHESMDLSNGCTALGIAVALGEIEMPSDEDVMHDRSLYSSVASCSSGVELDQAQVVVVGNAPGVGGRYRIGHSVMKDALDQDGIWEAIKDAGLDLPERPRTSDLDGRLVNVFLKCEASQDGLVRGRRNAMLDDSDVHWHRQIKSCVGGVTAAVTGDPAVFVSVSAAHQGPDGGGPVAAIVDLG.

Positions 1-103 are RU A; the sequence is MPDAIEVRKV…TIFATVPPED (103 aa). Substrate is bound by residues arginine 53 and 82 to 83; that span reads SG. Residues 115–250 form an RU B region; it reads RLTVGFAMSE…AQVVVVGNAP (136 aa). The active site involves lysine 165. Substrate is bound by residues asparagine 197 and 233–234; that span reads SS. Serine 233 acts as the Nucleophile in catalysis. The segment at 256–371 is RU C; that stretch reads YRIGHSVMKD…GPVAAIVDLG (116 aa). Glutamate 304 provides a ligand contact to Mg(2+). Substrate is bound by residues lysine 331 and 350–351; that span reads SV. Residues alanine 353, glutamine 356, glycine 357, proline 358, and glycine 361 each contribute to the Mg(2+) site.

Belongs to the cyclic amide hydrolase (CyAH) family. In terms of assembly, homotetramer.

It catalyses the reaction barbiturate + H2O = 3-oxo-3-ureidopropanoate. It participates in pyrimidine metabolism; uracil degradation via oxidative pathway; malonate and urea from uracil: step 2/3. With respect to regulation, inhibited by cyanuric acid. Its function is as follows. Responsible for the hydrolysis of barbituric acid (2,4,6-trihydroxy-1,3-pyrimidine), an intermediate in the oxidative catabolism of pyrimidines. Catalyzes the hydrolytic opening of the pyrimidine ring of barbituric acid to yield ureidomalonic acid. This chain is Barbiturase 1, found in Nocardioides sp. (strain ATCC BAA-499 / JS614).